We begin with the raw amino-acid sequence, 429 residues long: UDP-glucuronate 4-epimerase 1 (429 aa).

2 helical membrane passes run 36 to 56 and 87 to 107; these read FLWALFLIALTASYLSFQSFV and GISVLVTGATGFVGSHVSLAL. 89–120 serves as a coordination point for NAD(+); the sequence is SVLVTGATGFVGSHVSLALRKRGDGVVGLDNF. Tyr-239 acts as the Proton acceptor in catalysis.

Belongs to the NAD(P)-dependent epimerase/dehydratase family. In terms of assembly, homodimer. In root stele, leaves, siliques, flowers, pollen and stems.

Its subcellular location is the golgi apparatus. The protein resides in the golgi stack membrane. It carries out the reaction UDP-alpha-D-glucuronate = UDP-alpha-D-galacturonate. With respect to regulation, inhibited by UDP-Xylose. Its function is as follows. UDP-D-glucuronate 4-epimerase involved in the synthesis of the negatively charged monosaccharide that forms the backbone of pectic cell wall components. This Arabidopsis thaliana (Mouse-ear cress) protein is UDP-glucuronate 4-epimerase 1 (GAE1).